The following is a 429-amino-acid chain: Gamma-glutamyl phosphate reductase (429 aa).

The protein belongs to the gamma-glutamyl phosphate reductase family.

It localises to the cytoplasm. It carries out the reaction L-glutamate 5-semialdehyde + phosphate + NADP(+) = L-glutamyl 5-phosphate + NADPH + H(+). Its pathway is amino-acid biosynthesis; L-proline biosynthesis; L-glutamate 5-semialdehyde from L-glutamate: step 2/2. Its function is as follows. Catalyzes the NADPH-dependent reduction of L-glutamate 5-phosphate into L-glutamate 5-semialdehyde and phosphate. The product spontaneously undergoes cyclization to form 1-pyrroline-5-carboxylate. This is Gamma-glutamyl phosphate reductase from Bradyrhizobium sp. (strain ORS 278).